The chain runs to 400 residues: Elongation factor Tu (400 aa).

Residues 10 to 209 form the tr-type G domain; it reads KPHVNVGTIG…AVDSYIPTPE (200 aa). The interval 19–26 is G1; the sequence is GHVDHGKT. 19–26 is a GTP binding site; sequence GHVDHGKT. T26 is a binding site for Mg(2+). The G2 stretch occupies residues 60–64; that stretch reads GITIS. Residues 81–84 are G3; the sequence is DCPG. GTP contacts are provided by residues 81-85 and 136-139; these read DCPGH and NKAD. A G4 region spans residues 136 to 139; it reads NKAD. The segment at 174-176 is G5; the sequence is SGL.

The protein belongs to the TRAFAC class translation factor GTPase superfamily. Classic translation factor GTPase family. EF-Tu/EF-1A subfamily. In terms of assembly, monomer.

Its subcellular location is the cytoplasm. The enzyme catalyses GTP + H2O = GDP + phosphate + H(+). In terms of biological role, GTP hydrolase that promotes the GTP-dependent binding of aminoacyl-tRNA to the A-site of ribosomes during protein biosynthesis. In Desulfitobacterium hafniense (strain DSM 10664 / DCB-2), this protein is Elongation factor Tu.